A 261-amino-acid polypeptide reads, in one-letter code: tRNA pseudouridine synthase A (261 aa).

D52 serves as the catalytic Nucleophile. Substrate is bound at residue Y111.

Belongs to the tRNA pseudouridine synthase TruA family. As to quaternary structure, homodimer.

It carries out the reaction uridine(38/39/40) in tRNA = pseudouridine(38/39/40) in tRNA. In terms of biological role, formation of pseudouridine at positions 38, 39 and 40 in the anticodon stem and loop of transfer RNAs. The chain is tRNA pseudouridine synthase A from Jannaschia sp. (strain CCS1).